The chain runs to 474 residues: Serine/threonine-protein kinase VRK3 (474 aa).

Polar residues predominate over residues histidine 41–threonine 58. Positions histidine 41 to leucine 152 are disordered. The short motif at lysine 49–lysine 64 is the Nuclear localization signal element. 6 positions are modified to phosphoserine: serine 54, serine 55, serine 59, serine 82, serine 83, and serine 90. A compositionally biased stretch (low complexity) spans threonine 88 to arginine 101. A compositionally biased stretch (polar residues) spans serine 107–leucine 149. Serine 108 is modified (phosphoserine; by CDK5). Serine 115 and serine 122 each carry phosphoserine. The 292-residue stretch at tryptophan 166 to leucine 457 folds into the Protein kinase domain.

The protein belongs to the protein kinase superfamily. CK1 Ser/Thr protein kinase family. VRK subfamily. In terms of assembly, interacts with DUSP3. Interacts with RAN. Interacts with HSP70/HSPA1A. Phosphorylated at Ser-108 by CDK5; leading to protection of the cell against H2O2-induced apoptosis. Post-translationally, ubiquitinated by RNF144A.

It localises to the nucleus. The protein resides in the cytoplasm. It catalyses the reaction L-seryl-[protein] + ATP = O-phospho-L-seryl-[protein] + ADP + H(+). In terms of biological role, plays a role in the regulation of the cell cycle by phosphorylating the nuclear envelope protein barrier-to-autointegration factor/BAF that is required for disassembly and reassembly, respectively, of the nuclear envelope during mitosis. Under normal physiological conditions, negatively regulates ERK activity along with VHR/DUSP3 phosphatase in the nucleus, causing timely and transient action of ERK. Stress conditions activate CDK5 which phosphorylates VRK3 to increase VHR phosphatase activity and suppress prolonged ERK activation that causes cell death. For example, upon glutamate induction, promotes nuclear localization of HSP70/HSPA1A to inhibit ERK activation via VHR/DUSP3 phosphatase. The sequence is that of Serine/threonine-protein kinase VRK3 (VRK3) from Homo sapiens (Human).